The primary structure comprises 627 residues: MGKIIGIDLGTTNSCVSVMEGNEAVVIPNAEGKRTTPSIIAFVEGGEIKVGDPAKRQAVTNPTKTIASIKRFMGHTFAETQDEAKRVPYSVVKGDNNTPRVDIDGRLYTAQELSAMTLQKMKKTAEDYLGQTVTEAVITVPAYFNDAQRQATKEAGEIAGLKVMRIINEPTAAALAYGLDKKGNDQKIAVYDLGGGTFDISVLELGDGVFEVLSTNGDTHLGGDDFDQVIIDWLADEFKTEEGIDLRLDPMSLQRLKEAAEKAKIELSSSAETEINLPYVTATASGPKHLVKKLSRAKFEQLSDTLVKRSMEPVAKALKDAGLSTSDIDEVILVGGSTRMPRIADEVEKFFGKKASKGVNPDEVVAIGAAIQGGVLSGDVKDVLLLDVTPLSLGIETMGGVLTKLIESNTTIPTKKSQVFSTAADSQPSVEIHVLQGERAMAADNKTIGRFHLDGIPPAPRGVPQIEVTFDIDANGIIKVSATDKGTGKSHDIRIEASSGLTAEEIEKMKKDAEANADADRIAKERAEKLNEADSTIFQTESQLKELGDKLTDDQKTAIEYALTELRMAHQSQDLDAIQKGLDNVNAAWKTATEAMYAQGGDQGQQAAPQQEQSGDNVEDVEFEEVK.

Residue Thr197 is modified to Phosphothreonine; by autocatalysis. Over residues 596–615 (MYAQGGDQGQQAAPQQEQSG) the composition is skewed to low complexity. The disordered stretch occupies residues 596 to 627 (MYAQGGDQGQQAAPQQEQSGDNVEDVEFEEVK). Acidic residues predominate over residues 617–627 (NVEDVEFEEVK).

The protein belongs to the heat shock protein 70 family.

Acts as a chaperone. The protein is Chaperone protein DnaK of Flavobacterium johnsoniae (strain ATCC 17061 / DSM 2064 / JCM 8514 / BCRC 14874 / CCUG 350202 / NBRC 14942 / NCIMB 11054 / UW101) (Cytophaga johnsonae).